The chain runs to 65 residues: Large ribosomal subunit protein uL29 (65 aa).

The protein belongs to the universal ribosomal protein uL29 family.

The chain is Large ribosomal subunit protein uL29 from Buchnera aphidicola subsp. Cinara cedri (strain Cc).